The sequence spans 96 residues: Secreted RxLR effector protein 123 (96 aa).

Residues 1–22 (MVGAYYVGIALLVAGGSQTAAG) form the signal peptide. The RxLR-dEER motif lies at 49–70 (RFLRKSRNPKDNLMLSEANEER). Residues 57–96 (PKDNLMLSEANEERTPSSPSNSLTEFIVSEPITTNVMRTE) form a disordered region. Residues 87–96 (PITTNVMRTE) show a composition bias toward polar residues.

It belongs to the RxLR effector family.

The protein resides in the secreted. It localises to the host nucleus. It is found in the host cytoplasm. Functionally, secreted effector that dos not suppress the host cell death induced by cell death-inducing proteins. The protein is Secreted RxLR effector protein 123 of Plasmopara viticola (Downy mildew of grapevine).